The sequence spans 295 residues: Ribosomal RNA small subunit methyltransferase A (295 aa).

S-adenosyl-L-methionine-binding residues include Asn-29, Leu-31, Gly-56, Glu-77, Asp-102, and Asn-128.

This sequence belongs to the class I-like SAM-binding methyltransferase superfamily. rRNA adenine N(6)-methyltransferase family. RsmA subfamily.

The protein localises to the cytoplasm. The catalysed reaction is adenosine(1518)/adenosine(1519) in 16S rRNA + 4 S-adenosyl-L-methionine = N(6)-dimethyladenosine(1518)/N(6)-dimethyladenosine(1519) in 16S rRNA + 4 S-adenosyl-L-homocysteine + 4 H(+). Specifically dimethylates two adjacent adenosines (A1518 and A1519) in the loop of a conserved hairpin near the 3'-end of 16S rRNA in the 30S particle. May play a critical role in biogenesis of 30S subunits. The protein is Ribosomal RNA small subunit methyltransferase A of Listeria monocytogenes serovar 1/2a (strain ATCC BAA-679 / EGD-e).